A 116-amino-acid polypeptide reads, in one-letter code: Aspartate 1-decarboxylase (116 aa).

The active-site Schiff-base intermediate with substrate; via pyruvic acid is serine 25. Serine 25 carries the pyruvic acid (Ser) modification. Residue threonine 57 participates in substrate binding. Tyrosine 58 functions as the Proton donor in the catalytic mechanism. 72-74 (GAA) contacts substrate.

The protein belongs to the PanD family. In terms of assembly, heterooctamer of four alpha and four beta subunits. Pyruvate serves as cofactor. Post-translationally, is synthesized initially as an inactive proenzyme, which is activated by self-cleavage at a specific serine bond to produce a beta-subunit with a hydroxyl group at its C-terminus and an alpha-subunit with a pyruvoyl group at its N-terminus.

Its subcellular location is the cytoplasm. The catalysed reaction is L-aspartate + H(+) = beta-alanine + CO2. Its pathway is cofactor biosynthesis; (R)-pantothenate biosynthesis; beta-alanine from L-aspartate: step 1/1. Catalyzes the pyruvoyl-dependent decarboxylation of aspartate to produce beta-alanine. The chain is Aspartate 1-decarboxylase from Helicobacter pylori (strain HPAG1).